The primary structure comprises 146 residues: Hemoglobin subunit beta (146 aa).

The Globin domain occupies 2–146; sequence HWTAEEKQLI…VAHALARKYH (145 aa). 2 residues coordinate heme b: H63 and H92.

The protein belongs to the globin family. In terms of assembly, heterotetramer of two alpha chains and two beta chains. Red blood cells.

Functionally, involved in oxygen transport from the lung to the various peripheral tissues. In Ciconia ciconia (White stork), this protein is Hemoglobin subunit beta (HBB).